Reading from the N-terminus, the 229-residue chain is Ribonuclease 3 (229 aa).

Residues 5-127 (LDRLERKLGY…LIGAIYLDTG (123 aa)) enclose the RNase III domain. Glutamate 40 is a Mg(2+) binding site. Aspartate 44 is a catalytic residue. Mg(2+) is bound by residues aspartate 113 and glutamate 116. Glutamate 116 is an active-site residue. In terms of domain architecture, DRBM spans 154-224 (DPKTRLQEFL…AAAALVALGV (71 aa)).

It belongs to the ribonuclease III family. In terms of assembly, homodimer. The cofactor is Mg(2+).

It localises to the cytoplasm. It carries out the reaction Endonucleolytic cleavage to 5'-phosphomonoester.. Digests double-stranded RNA. Involved in the processing of primary rRNA transcript to yield the immediate precursors to the large and small rRNAs (23S and 16S). Processes some mRNAs, and tRNAs when they are encoded in the rRNA operon. Processes pre-crRNA and tracrRNA of type II CRISPR loci if present in the organism. This Pseudomonas paraeruginosa (strain DSM 24068 / PA7) (Pseudomonas aeruginosa (strain PA7)) protein is Ribonuclease 3.